We begin with the raw amino-acid sequence, 87 residues long: Putative regulatory protein GWCH70_1057 (87 aa).

The protein belongs to the RemA family.

This chain is Putative regulatory protein GWCH70_1057, found in Geobacillus sp. (strain WCH70).